We begin with the raw amino-acid sequence, 157 residues long: Transcriptional repressor NrdR (157 aa).

The disordered stretch occupies residues 1–22; the sequence is MKCPYCSSPDSRVINSRPSDDG. Residues 3–34 fold into a zinc finger; the sequence is CPYCSSPDSRVINSRPSDDGASIRRRRECLTC. Residues 8 to 17 show a composition bias toward polar residues; it reads SPDSRVINSR. The ATP-cone domain occupies 49 to 136; the sequence is LMVVKRSGVR…VYRDFDSLER (88 aa).

It belongs to the NrdR family. It depends on Zn(2+) as a cofactor.

Negatively regulates transcription of bacterial ribonucleotide reductase nrd genes and operons by binding to NrdR-boxes. The polypeptide is Transcriptional repressor NrdR (Deinococcus radiodurans (strain ATCC 13939 / DSM 20539 / JCM 16871 / CCUG 27074 / LMG 4051 / NBRC 15346 / NCIMB 9279 / VKM B-1422 / R1)).